The following is a 70-amino-acid chain: uncharacterized protein (70 aa).

The protein localises to the plastid. This is an uncharacterized protein from Euglena longa (Euglenophycean alga).